Here is a 95-residue protein sequence, read N- to C-terminus: Parvalbumin alpha (95 aa).

A Phosphoserine modification is found at serine 19. EF-hand domains lie at 34 to 69 and 73 to 95; these read KNRE…FSAD and LSDT…KIGA. Residues aspartate 47, aspartate 49, serine 51, phenylalanine 53, glutamate 55, glutamate 58, aspartate 86, aspartate 88, aspartate 90, and lysine 92 each contribute to the Ca(2+) site.

This sequence belongs to the parvalbumin family.

In terms of biological role, in muscle, parvalbumin is thought to be involved in relaxation after contraction. It binds two calcium ions. The protein is Parvalbumin alpha (PVALB) of Cavia porcellus (Guinea pig).